The following is a 208-amino-acid chain: Floral homeotic protein PISTILLATA (208 aa).

The MADS-box domain occupies 3–57; that stretch reads RGKIEIKRIENANNRVVTFSKRRNGLVKKAKEITVLCDAKVALIIFASNGKMIDY. Residues 75–117 are a coiled coil; that stretch reads SGKKLWDAKHENLSNEIDRIKKENDSLQLELRHLKGEDIQSLN. The K-box domain occupies 84-170; it reads HENLSNEIDR…TFQLQQQEMA (87 aa).

As to quaternary structure, forms a heterodimer with APETALA3, capable of binding to CArG-box sequences. AP3/PI heterodimer binds AP1 or SEP3 to form a ternary complex.

It localises to the nucleus. In terms of biological role, probable transcription factor involved in the genetic control of flower development. Is required for normal development of petals and stamens in the wild-type flower. Forms a heterodimer with APETALA3 that is required for autoregulation of both AP3 and PI genes. AP3/PI heterodimer interacts with APETALA1 or SEPALLATA3 to form a ternary complex that could be responsible for the regulation of the genes involved in the flower development. AP3/PI heterodimer activates the expression of NAP. AP3/PI prevents GATA22/GNL and GATA21/GNC expression. The polypeptide is Floral homeotic protein PISTILLATA (PI) (Arabidopsis thaliana (Mouse-ear cress)).